The primary structure comprises 256 residues: Capsid protein (256 aa).

The Bipartite nuclear localization signal signature appears at 3-20; that stretch reads KRPADIVISTPASKVRRK. The Nuclear localization signal signature appears at 40 to 54; sequence RRRTWVNRPMYRKPM. A zinc finger lies at 68 to 85; sequence CEGPCKVQSYEQRHDVAH. A Nuclear export signal motif is present at residues 101–122; the sequence is ITHRTGKRFCIKSIYVLGKIWM. Positions 200-247 match the Bipartite nuclear localization signal motif; sequence NRFYKIYNHCTYNHQEAAKYENHTENALLLYMACTHASNPVYATLKIR.

The protein belongs to the geminiviridae capsid protein family. As to quaternary structure, homomultimer. Binds to single-stranded and double-stranded viral DNA. Interacts (via nuclear localization signals) with host importin alpha-1a.

It localises to the virion. It is found in the host nucleus. In terms of biological role, encapsidates the viral genome into characteristic twinned ('geminate') particles. Binds the genomic viral ssDNA and shuttles it into and out of the cell nucleus. Plays a role in protection of the genome from degradation, virus acquisition and transmission by insect vectors, infectivity, and systemic movement. The CP of monopartite geminiviruses is absolutely essential for virus movement. The protein is Capsid protein of Tomato leaf curl virus (strain Australia) (ToLCV).